A 277-amino-acid polypeptide reads, in one-letter code: Anamorsin homolog (277 aa).

Residues 1–134 are N-terminal SAM-like domain; it reads MALQGNVAIL…PFYPEFSDAV (134 aa). Residues 135–191 are linker; that stretch reads SFTSKKQSFESAAIPLAVKSTTTQPIKKWTVLADDFGDDQDDDIIDEDTLLDDTDEV. Cysteine 199, cysteine 210, cysteine 213, and cysteine 215 together coordinate [2Fe-2S] cluster. Residues 199 to 215 are fe-S binding site A; it reads CGDAVGGKKRACKNCTC. Cysteine 238, cysteine 241, cysteine 249, and cysteine 252 together coordinate [4Fe-4S] cluster. 2 short sequence motifs (cx2C motif) span residues 238 to 241 and 249 to 252; these read CGNC and CGSC. Residues 238 to 252 are fe-S binding site B; sequence CGNCFKGDAFRCGSC.

The protein belongs to the anamorsin family. As to quaternary structure, monomer. The cofactor is [2Fe-2S] cluster. Requires [4Fe-4S] cluster as cofactor.

The protein localises to the cytoplasm. It localises to the mitochondrion intermembrane space. Component of the cytosolic iron-sulfur (Fe-S) protein assembly (CIA) machinery. Required for the maturation of extramitochondrial Fe-S proteins. Part of an electron transfer chain functioning in an early step of cytosolic Fe-S biogenesis, facilitating the de novo assembly of a [4Fe-4S] cluster on the cytosolic Fe-S scaffold complex. Electrons are transferred from NADPH via a FAD- and FMN-containing diflavin oxidoreductase. Together with the diflavin oxidoreductase, also required for the assembly of the diferric tyrosyl radical cofactor of ribonucleotide reductase (RNR), probably by providing electrons for reduction during radical cofactor maturation in the catalytic small subunit. This is Anamorsin homolog from Phytophthora infestans (strain T30-4) (Potato late blight agent).